Here is a 114-residue protein sequence, read N- to C-terminus: uncharacterized protein (114 aa).

Disordered stretches follow at residues 26–45 (GMKQKRKPASSEPTPEDALG) and 72–98 (PKGSEPPGRSAGLQGATERSGRPSVQA).

This is an uncharacterized protein from Homo sapiens (Human).